Consider the following 140-residue polypeptide: Extracellular globin-1 (140 aa).

Positions 1 to 140 (ECDVLERFKV…YDFIASGIKP (140 aa)) constitute a Globin domain. Cysteine 2 and cysteine 130 are joined by a disulfide. Histidine 93 is a heme b binding site.

Belongs to the globin family. In terms of assembly, the giant hemoglobins of worms are formed of a monomeric subunit and a disulfide-bonded trimer. This subunit is monomeric.

Its subcellular location is the secreted. The chain is Extracellular globin-1 from Metaphire hilgendorfi (Earthworm).